A 495-amino-acid chain; its full sequence is Histidine--tRNA ligase (495 aa).

This sequence belongs to the class-II aminoacyl-tRNA synthetase family. Homodimer.

The protein resides in the cytoplasm. It catalyses the reaction tRNA(His) + L-histidine + ATP = L-histidyl-tRNA(His) + AMP + diphosphate + H(+). This Ruegeria pomeroyi (strain ATCC 700808 / DSM 15171 / DSS-3) (Silicibacter pomeroyi) protein is Histidine--tRNA ligase.